The following is a 548-amino-acid chain: Rhodopsin kinase grk7-b (548 aa).

Ser-33 carries the phosphoserine; by PKA modification. One can recognise an RGS domain in the interval 53-172; the sequence is FEDICEQQPI…QTSLFFDRFV (120 aa). The 260-residue stretch at 187–446 folds into the Protein kinase domain; that stretch reads FYEFRTLGKG…NDDPRKHEFF (260 aa). Residues 193-201 and Lys-216 each bind ATP; that span reads LGKGGFGEV. Residue Asp-312 is the Proton acceptor of the active site. An AGC-kinase C-terminal domain is found at 447–512; the sequence is KSINFPRLEA…GVVPIAWQQE (66 aa). Residues 520–548 are disordered; that stretch reads DELSDPNRKESAAGLEDEEQQKSKSCTLL. Cys-545 is modified (cysteine methyl ester). Residue Cys-545 is the site of S-geranylgeranyl cysteine attachment. Residues 546–548 constitute a propeptide, removed in mature form; sequence TLL.

This sequence belongs to the protein kinase superfamily. AGC Ser/Thr protein kinase family. GPRK subfamily. In terms of processing, phosphorylation at Ser-33 is regulated by light and activated by cAMP. Expressed in the eyes (at protein level). Expressed in the eyes, the pineal gland and in the brain.

The protein resides in the membrane. It carries out the reaction L-threonyl-[rhodopsin] + ATP = O-phospho-L-threonyl-[rhodopsin] + ADP + H(+). The catalysed reaction is L-seryl-[rhodopsin] + ATP = O-phospho-L-seryl-[rhodopsin] + ADP + H(+). Functionally, retina-specific kinase involved in the shutoff of the photoresponse and adaptation to changing light conditions via cone opsin phosphorylation, including rhodopsin (RHO). This Danio rerio (Zebrafish) protein is Rhodopsin kinase grk7-b (grk7b).